A 312-amino-acid chain; its full sequence is Aminoacyl tRNA synthase complex-interacting multifunctional protein 1 (312 aa).

Residue Met1 is modified to N-acetylmethionine. Ala2 is subject to N-acetylalanine. Residues 6 to 46 are required for fibroblast proliferation; sequence AVLKRLEQKGAEADQIIEYLKQQVSLLKEKAILQATLREEK. Residues 54-194 are interaction with HSP90B1; it reads KLKKEIEELK…APRTVVSGLV (141 aa). The interval 101 to 114 is required for endothelial cell death; that stretch reads AVTTVSSGTKEQIK. Residues 107-147 form a disordered region; it reads SGTKEQIKGGTGDEKKAKEKIEKKGEKKEKKQQSIAGSADS. The span at 111 to 138 shows a compositional bias: basic and acidic residues; it reads EQIKGGTGDEKKAKEKIEKKGEKKEKKQ. Positions 114–192 are required for endothelial cell migration; sequence KGGTGDEKKA…EIAPRTVVSG (79 aa). Lys137 is covalently cross-linked (Glycyl lysine isopeptide (Lys-Gly) (interchain with G-Cter in SUMO1)). Ser140 carries the phosphoserine modification. Positions 151–252 constitute a tRNA-binding domain; that stretch reads DVSRLDLRIG…NGSVPGDRIT (102 aa). Lys269 carries the post-translational modification N6-succinyllysine.

Homodimer. Part of the multisynthetase complex (MSC), a multisubunit complex that groups tRNA ligases for Arg (RARS1), Asp (DARS1), Gln (QARS1), Ile (IARS1), Leu (LARS1), Lys (KARS1), Met (MARS1) the bifunctional ligase for Glu and Pro (EPRS1) and the auxiliary subunits AIMP1/p43, AIMP2/p38 and EEF1E1/p18. Interacts (via N-terminus) with RARS1 (via N-terminus). Part of a complex composed of RARS1, QARS1 and AIMP1. Interacts (via C-terminus) with SMURF2. Interacts (via N-terminus) with HSP90B1/gp96 (via C-terminus). Interacts with PSMA7. Interacts with TARS3. In terms of processing, cleaved by caspase-7 in response to apoptosis to produce EMAP-II.

It is found in the nucleus. The protein resides in the cytoplasm. It localises to the cytosol. Its subcellular location is the secreted. The protein localises to the endoplasmic reticulum. It is found in the golgi apparatus. Its function is as follows. Non-catalytic component of the multisynthase complex. Stimulates the catalytic activity of cytoplasmic arginyl-tRNA synthase. Binds tRNA. Possesses inflammatory cytokine activity. Negatively regulates TGF-beta signaling through stabilization of SMURF2 by binding to SMURF2 and inhibiting its SMAD7-mediated degradation. Involved in glucose homeostasis through induction of glucagon secretion at low glucose levels. Promotes dermal fibroblast proliferation and wound repair. Regulates KDELR1-mediated retention of HSP90B1/gp96 in the endoplasmic reticulum. Plays a role in angiogenesis by inducing endothelial cell migration at low concentrations and endothelian cell apoptosis at high concentrations. Induces maturation of dendritic cells and monocyte cell adhesion. Modulates endothelial cell responses by degrading HIF-1A through interaction with PSMA7. This Homo sapiens (Human) protein is Aminoacyl tRNA synthase complex-interacting multifunctional protein 1 (AIMP1).